The chain runs to 256 residues: ATP synthase peripheral stalk subunit b, mitochondrial (256 aa).

A mitochondrion-targeting transit peptide spans 1-42 (MLSRVVLSAAATAAPCLKNAAVLGPGVLQATRVFHTGQPRLA). Lysine 131 carries the post-translational modification N6-succinyllysine. N6-acetyllysine is present on residues lysine 139, lysine 154, lysine 162, lysine 221, lysine 233, and lysine 244.

It belongs to the eukaryotic ATPase B chain family. In terms of assembly, component of the ATP synthase complex composed at least of ATP5F1A/subunit alpha, ATP5F1B/subunit beta, ATP5MC1/subunit c (homooctomer), MT-ATP6/subunit a, MT-ATP8/subunit 8, ATP5ME/subunit e, ATP5MF/subunit f, ATP5MG/subunit g, ATP5MK/subunit k, ATP5MJ/subunit j, ATP5F1C/subunit gamma, ATP5F1D/subunit delta, ATP5F1E/subunit epsilon, ATP5PF/subunit F6, ATP5PB/subunit b, ATP5PD/subunit d, ATP5PO/subunit OSCP. ATP synthase complex consists of a soluble F(1) head domain (subunits alpha(3) and beta(3)) - the catalytic core - and a membrane F(0) domain - the membrane proton channel (subunits c, a, 8, e, f, g, k and j). These two domains are linked by a central stalk (subunits gamma, delta, and epsilon) rotating inside the F1 region and a stationary peripheral stalk (subunits F6, b, d, and OSCP).

It is found in the mitochondrion. It localises to the mitochondrion inner membrane. Functionally, subunit b, of the mitochondrial membrane ATP synthase complex (F(1)F(0) ATP synthase or Complex V) that produces ATP from ADP in the presence of a proton gradient across the membrane which is generated by electron transport complexes of the respiratory chain. ATP synthase complex consist of a soluble F(1) head domain - the catalytic core - and a membrane F(1) domain - the membrane proton channel. These two domains are linked by a central stalk rotating inside the F(1) region and a stationary peripheral stalk. During catalysis, ATP synthesis in the catalytic domain of F(1) is coupled via a rotary mechanism of the central stalk subunits to proton translocation. In vivo, can only synthesize ATP although its ATP hydrolase activity can be activated artificially in vitro. Part of the complex F(0) domain. Part of the complex F(0) domain and the peripheric stalk, which acts as a stator to hold the catalytic alpha(3)beta(3) subcomplex and subunit a/ATP6 static relative to the rotary elements. In Rattus norvegicus (Rat), this protein is ATP synthase peripheral stalk subunit b, mitochondrial.